Consider the following 408-residue polypeptide: Peptidase T (408 aa).

His78 is a Zn(2+) binding site. Asp80 is an active-site residue. Residue Asp140 coordinates Zn(2+). The active-site Proton acceptor is Glu173. Residues Glu174, Asp196, and His379 each coordinate Zn(2+).

It belongs to the peptidase M20B family. Zn(2+) serves as cofactor.

It localises to the cytoplasm. It carries out the reaction Release of the N-terminal residue from a tripeptide.. Cleaves the N-terminal amino acid of tripeptides. This is Peptidase T from Shigella flexneri serotype 5b (strain 8401).